The chain runs to 215 residues: Ras-related protein Rab-5A (215 aa).

S29, A30, G32, K33, S34, S35, H46, E47, T52, and G78 together coordinate GTP. Residue S34 participates in Mg(2+) binding. 2 consecutive short sequence motifs (switch) follow at residues 44–56 (QFHEFQESTIGAA) and 77–93 (AGQERYHSLAPMYYRGA). T52 contacts Mg(2+). A Phosphoserine; by LRRK2 modification is found at S84. The (Microbial infection) N-beta-linked (GlcNAc) arginine glycan is linked to R120. GTP-binding residues include N133, K134, D136, A164, and K165. Residues 181–215 (LPKNEPQNPGANSARGRGVDLTEPTQPTRNQCCSN) are disordered. A compositionally biased stretch (polar residues) spans 203 to 215 (EPTQPTRNQCCSN). 2 S-geranylgeranyl cysteine lipidation sites follow: C212 and C213.

This sequence belongs to the small GTPase superfamily. Rab family. In terms of assembly, interacts with SGSM1 and SGSM3. Interacts with PIK3CB. Interacts with GDI1; this promotes dissociation from membranes; phosphorylation at Ser-84 disrupts this interaction. Interacts with GDI2; phosphorylation at Ser-84 disrupts the interaction. Interacts with EEA1. Interacts with RIN1 and GAPVD1, which regulate its pathway, probably by acting as a GEF. Interacts with RINL. Interacts with ALS2CL, SUN2, ZFYVE20 and RUFY1. Interacts with RABEP1; one RABEP1 homodimer binds two RAB5A chains, but at opposite sides of the dimer. Interacts with OCRL. Interacts with INPP5F. May be a component of a complex composed of RAB5A, DYN2 and PIK3C3. Does not interact with BLOC-3 complex (heterodimer of HPS1 and HPS4). Interacts with CLN5. Interacts with APPL2. Interacts with F8A1/F8A2/F8A3. Found in a complex with F8A1/F8A2/F8A3, HTT and RAB5A; mediates the recruitment of HTT by RAB5A onto early endosomes. Interacts with ATP9A. Interacts with PPP1R21; mediates the recruitment of FERRY complex by RAB5A onto early endosomes. The cofactor is Mg(2+). In terms of processing, phosphorylation of Ser-84 in the switch II region by LRRK2 prevents the association of RAB regulatory proteins, including RAB GDP dissociation inhibitors GDI1 and GDI2. Post-translationally, (Microbial infection) Glycosylated on arginine residues by S.typhimurium protein Ssek3.

The protein resides in the cell membrane. Its subcellular location is the early endosome membrane. It localises to the melanosome. It is found in the cytoplasmic vesicle. The protein localises to the cell projection. The protein resides in the ruffle. Its subcellular location is the membrane. It localises to the cytoplasm. It is found in the cytosol. The protein localises to the phagosome membrane. The protein resides in the endosome membrane. It carries out the reaction GTP + H2O = GDP + phosphate + H(+). With respect to regulation, regulated by guanine nucleotide exchange factors (GEFs) including RINL, which promote the exchange of bound GDP for free GTP. Regulated by GTPase activating proteins (GAPs) which increase the GTP hydrolysis activity. Inhibited by GDP dissociation inhibitors (GDIs). In terms of biological role, the small GTPases Rab are key regulators of intracellular membrane trafficking, from the formation of transport vesicles to their fusion with membranes. Rabs cycle between an inactive GDP-bound form and an active GTP-bound form that is able to recruit to membranes different sets of downstream effectors directly responsible for vesicle formation, movement, tethering and fusion. RAB5A is required for the fusion of plasma membranes and early endosomes. Contributes to the regulation of filopodia extension. Required for the exosomal release of SDCBP, CD63, PDCD6IP and syndecan. Regulates maturation of apoptotic cell-containing phagosomes, probably downstream of DYN2 and PIK3C3. This is Ras-related protein Rab-5A from Homo sapiens (Human).